The primary structure comprises 404 residues: Argininosuccinate synthase (404 aa).

ATP-binding positions include alanine 12–serine 20 and alanine 40. L-citrulline is bound by residues tyrosine 92 and serine 97. Position 122 (glycine 122) interacts with ATP. L-aspartate-binding residues include threonine 124, asparagine 128, and aspartate 129. Asparagine 128 provides a ligand contact to L-citrulline. Arginine 132, serine 181, serine 190, glutamate 266, and tyrosine 278 together coordinate L-citrulline.

Belongs to the argininosuccinate synthase family. Type 1 subfamily. Homotetramer.

It localises to the cytoplasm. The enzyme catalyses L-citrulline + L-aspartate + ATP = 2-(N(omega)-L-arginino)succinate + AMP + diphosphate + H(+). It participates in amino-acid biosynthesis; L-arginine biosynthesis; L-arginine from L-ornithine and carbamoyl phosphate: step 2/3. This Erwinia tasmaniensis (strain DSM 17950 / CFBP 7177 / CIP 109463 / NCPPB 4357 / Et1/99) protein is Argininosuccinate synthase.